Here is a 235-residue protein sequence, read N- to C-terminus: tRNA pseudouridine synthase B (235 aa).

The active-site Nucleophile is Asp48.

This sequence belongs to the pseudouridine synthase TruB family. Type 1 subfamily.

The enzyme catalyses uridine(55) in tRNA = pseudouridine(55) in tRNA. Functionally, responsible for synthesis of pseudouridine from uracil-55 in the psi GC loop of transfer RNAs. The polypeptide is tRNA pseudouridine synthase B (Phocaeicola vulgatus (strain ATCC 8482 / DSM 1447 / JCM 5826 / CCUG 4940 / NBRC 14291 / NCTC 11154) (Bacteroides vulgatus)).